Here is a 160-residue protein sequence, read N- to C-terminus: Eukaryotic translation initiation factor 5A-1/2 (160 aa).

Basic and acidic residues predominate over residues 1 to 12 (MSDEEHHFESKA). Positions 1 to 21 (MSDEEHHFESKADAGASKTYP) are disordered. Lys52 is subject to Hypusine.

The protein belongs to the eIF-5A family. Lys-52 undergoes hypusination, a unique post-translational modification that consists in the addition of a butylamino group from spermidine to lysine side chain, leading to the formation of the unusual amino acid hypusine. eIF-5As are the only known proteins to undergo this modification, which is essential for their function.

In terms of biological role, translation factor that promotes translation elongation and termination, particularly upon ribosome stalling at specific amino acid sequence contexts. Binds between the exit (E) and peptidyl (P) site of the ribosome and promotes rescue of stalled ribosome: specifically required for efficient translation of polyproline-containing peptides as well as other motifs that stall the ribosome. Acts as a ribosome quality control (RQC) cofactor by joining the RQC complex to facilitate peptidyl transfer during CAT tailing step. This chain is Eukaryotic translation initiation factor 5A-1/2 (EIF5A1), found in Solanum tuberosum (Potato).